The primary structure comprises 162 residues: Caveolin-2 (162 aa).

Over 1-86 the chain is Cytoplasmic; the sequence is MGLETEKADV…FEISKYVIYK (86 aa). Residue Tyr-19 is modified to Phosphotyrosine; by SRC. Residues Ser-20 and Ser-23 each carry the phosphoserine modification. At Tyr-27 the chain carries Phosphotyrosine; by SRC. Ser-36 is modified (phosphoserine). The helical intramembrane region spans 87–107; sequence FLTFFLAIPMAFAAGILFAIL. Residues 108-162 are Cytoplasmic-facing; the sequence is SCLHIWIIMPFVKTCLMVLPSVQTIWKTITDVVIAPLCTSVGRSFSSISLQLSHD.

This sequence belongs to the caveolin family. As to quaternary structure, monomer or homodimer. Interacts with CAV1; the interaction forms a stable heterooligomeric complex that is required for targeting to lipid rafts and for caveolae formation. Tyrosine phosphorylated forms do not form heterooligomers with the Tyr-19-phosphorylated form existing as a monomer or dimer, and the Tyr-27-form as a monomer only. Interacts (tyrosine phosphorylated form) with the SH2 domain-containing proteins, RASA1, NCK1 and SRC. Interacts (tyrosine phosphorylated form) with INSR, the interaction (Tyr-27-phosphorylated form) is increased on insulin stimulation. Interacts (Tyr-19 phosphorylated form) with MAPK1 (phosphorylated form); the interaction, promoted by insulin, leads to nuclear location and MAPK1 activation. Interacts with STAT3; the interaction is increased on insulin-induced tyrosine phosphorylation leading to STAT activation. In terms of processing, phosphorylated on serine and tyrosine residues. CAV1 promotes phosphorylation on Ser-23 which then targets the complex to the plasma membrane, lipid rafts and caveolae. Phosphorylation on Ser-36 appears to modulate mitosis in endothelial cells. Phosphorylation on both Tyr-19 and Tyr-27 is required for insulin-induced 'Ser-727' phosphorylation of STAT3 and its activation. Phosphorylation on Tyr-19 is required for insulin-induced phosphorylation of MAPK1 and DNA binding of STAT3. Tyrosine phosphorylation is induced by both EGF and insulin (By. similarity).

It is found in the nucleus. The protein resides in the cytoplasm. It localises to the golgi apparatus membrane. The protein localises to the cell membrane. Its subcellular location is the membrane. It is found in the caveola. Functionally, may act as a scaffolding protein within caveolar membranes. Interacts directly with G-protein alpha subunits and can functionally regulate their activity. Acts as an accessory protein in conjunction with CAV1 in targeting to lipid rafts and driving caveolae formation. The Ser-36 phosphorylated form has a role in modulating mitosis in endothelial cells. Positive regulator of cellular mitogenesis of the MAPK signaling pathway. Required for the insulin-stimulated nuclear translocation and activation of MAPK1 and STAT3, and the subsequent regulation of cell cycle progression. This chain is Caveolin-2 (CAV2), found in Mustela putorius furo (European domestic ferret).